A 595-amino-acid polypeptide reads, in one-letter code: Aspartate--tRNA(Asp/Asn) ligase (595 aa).

Glu175 lines the L-aspartate pocket. The tract at residues 199–202 (QQYK) is aspartate. L-aspartate is bound by residues Arg221 and His454. 221-223 (RDE) lines the ATP pocket. Residue Glu488 participates in ATP binding. Arg495 is an L-aspartate binding site. Residue 540–543 (GIDR) participates in ATP binding.

Belongs to the class-II aminoacyl-tRNA synthetase family. Type 1 subfamily. Homodimer.

It is found in the cytoplasm. It carries out the reaction tRNA(Asx) + L-aspartate + ATP = L-aspartyl-tRNA(Asx) + AMP + diphosphate. In terms of biological role, aspartyl-tRNA synthetase with relaxed tRNA specificity since it is able to aspartylate not only its cognate tRNA(Asp) but also tRNA(Asn). Reaction proceeds in two steps: L-aspartate is first activated by ATP to form Asp-AMP and then transferred to the acceptor end of tRNA(Asp/Asn). The protein is Aspartate--tRNA(Asp/Asn) ligase of Rhizobium meliloti (strain 1021) (Ensifer meliloti).